Consider the following 443-residue polypeptide: Glucose-6-phosphate isomerase (443 aa).

The Proton donor role is filled by Glu285. Catalysis depends on residues His306 and Lys420.

The protein belongs to the GPI family.

It is found in the cytoplasm. It catalyses the reaction alpha-D-glucose 6-phosphate = beta-D-fructose 6-phosphate. It participates in carbohydrate biosynthesis; gluconeogenesis. It functions in the pathway carbohydrate degradation; glycolysis; D-glyceraldehyde 3-phosphate and glycerone phosphate from D-glucose: step 2/4. Functionally, catalyzes the reversible isomerization of glucose-6-phosphate to fructose-6-phosphate. This Staphylococcus epidermidis (strain ATCC 12228 / FDA PCI 1200) protein is Glucose-6-phosphate isomerase.